A 65-amino-acid chain; its full sequence is Large ribosomal subunit protein bL33m (65 aa).

Belongs to the bacterial ribosomal protein bL33 family. As to quaternary structure, component of the mitochondrial ribosome large subunit (39S) which comprises a 16S rRNA and about 50 distinct proteins.

Its subcellular location is the mitochondrion. In Anopheles gambiae (African malaria mosquito), this protein is Large ribosomal subunit protein bL33m (mRpL33).